The primary structure comprises 316 residues: Retron Ec73 reverse transcriptase (316 aa).

Residues 1–243 enclose the Reverse transcriptase domain; it reads MRIYSLIDSQ…GSIVVTGLKV (243 aa). D99, D189, and D190 together coordinate Mg(2+). A necessary and required for recognition and binding of RNA region spans residues 247–316; sequence FHITLHRSMK…WIQNLHNKVE (70 aa).

Belongs to the bacterial reverse transcriptase family.

The enzyme catalyses DNA(n) + a 2'-deoxyribonucleoside 5'-triphosphate = DNA(n+1) + diphosphate. Its function is as follows. Reverse transcriptase (RT) component of antiviral defense system retron Ec73, composed of a non-coding RNA (ncRNA) followed by a ribosyltransferase/DNA-binding protein then a reverse transcriptase (RT). Expression of this retron confers protection against bacteriophages SECphi4, SECphi6, SECphi27 and P1. At multiplicity of infection (MOI) of 0.02 cultures grow normally when infected with SECphi4 without collapsing, at MOI 2 cultures enter growth stasis. Responsible for synthesis of msDNA-Ec73 (a branched molecule with RNA linked by a 2',5'-phosphodiester bond to ssDNA). The retron transcript serves as primer (from a conserved internal G residue) and template for the reaction, and codes for the RT. Recognizes only its cognate RNA as a primer template. The polypeptide is Retron Ec73 reverse transcriptase (Escherichia coli).